Reading from the N-terminus, the 195-residue chain is Rubrerythrin-1 (195 aa).

The 148-residue stretch at 3–150 (SLKGTKTAEN…ALLKNIEENK (148 aa)) folds into the Ferritin-like diiron domain. Fe(3+) contacts are provided by glutamate 20, glutamate 53, glutamate 98, glutamate 101, glutamate 132, histidine 135, cysteine 162, cysteine 165, cysteine 178, and cysteine 181. A Rubredoxin-like domain is found at 157–191 (VKFWKCIKCGYIFEGKTAPKVCPACLHPQAYFEIL).

As to quaternary structure, homodimer. The cofactor is Fe(3+).

The catalysed reaction is H2O2 + NADH + H(+) = NAD(+) + 2 H2O. With respect to regulation, rubredoxin (Rd) increases the NADH consumption rate by serving as an intermediary electron-transfer shuttle between NROR and RubY. Functionally, functions as the terminal component of an NADH peroxidase (NADH:H(2)O(2) oxidoreductase) when using NADH:rubredoxin oxidoreductase (NROR) as the electron transport intermediary from NADH to RubY. The sequence is that of Rubrerythrin-1 (rbr1) from Clostridium acetobutylicum (strain ATCC 824 / DSM 792 / JCM 1419 / IAM 19013 / LMG 5710 / NBRC 13948 / NRRL B-527 / VKM B-1787 / 2291 / W).